The following is a 262-amino-acid chain: Small ribosomal subunit protein uS3 (262 aa).

In terms of domain architecture, KH type-2 spans 39–107 (VREFLKKKLK…PVHVNIEEIR (69 aa)). The disordered stretch occupies residues 211 to 262 (NDAPVVEEPQEERRKRPGRPEGRRREGEGRPAGQRRGAGAGARRGTDAKTGE). Residues 221 to 239 (EERRKRPGRPEGRRREGEG) are compositionally biased toward basic and acidic residues.

This sequence belongs to the universal ribosomal protein uS3 family. In terms of assembly, part of the 30S ribosomal subunit. Forms a tight complex with proteins S10 and S14.

Its function is as follows. Binds the lower part of the 30S subunit head. Binds mRNA in the 70S ribosome, positioning it for translation. The protein is Small ribosomal subunit protein uS3 of Ralstonia pickettii (strain 12J).